The sequence spans 327 residues: Thioredoxin reductase sirT (327 aa).

FAD contacts are provided by residues 15-18 (AGPA), 37-42 (DTGVFR), His-50, and Ala-115. Residues Cys-139 and Cys-142 are joined by a disulfide bond. Residues Asp-289 and 296 to 297 (QV) contribute to the FAD site.

Belongs to the class-II pyridine nucleotide-disulfide oxidoreductase family. In terms of assembly, homodimer. It depends on FAD as a cofactor.

The protein operates within mycotoxin biosynthesis. Its function is as follows. Thioredoxin reductase; part of the gene cluster that mediates the biosynthesis of sirodesmin PL, an epipolythiodioxopiperazine (ETP) characterized by a disulfide bridged cyclic dipeptide and that acts as a phytotoxin which is involved in the blackleg didease of canola. SirD catalyzes the O-prenylation of L-tyrosine (L-Tyr) in the presence of dimethylallyl diphosphate (DMAPP) to yield 4-O-dimethylallyl-L-Tyr, and therefore represents probably the first pathway-specific enzyme in the biosynthesis of sirodesmin PL. 4-O-dimethylallyl-L-Tyr, then undergoes condensation with L-Ser in a reaction catalyzed by the non-ribosomal peptide synthase sirP to form the diketopiperazine (DKP) backbone. Further bishydroxylation of the DKP performed by the cytochrome P450 monooxygenase sirC leads to the production of the intermediate phomamide. This step is essential to form the reactive thiol group required for toxicity of sirodesmin PL. The next steps of sirodesmin biosynthesis are not well understood yet, but some predictions could be made from intermediate compounds identification. Phomamide is converted into phomalizarine via oxidation, probably by sirT. Further oxidation, methylation (by sirM or sirN) and reduction steps convert phomalizarine to deacetyl sirodesmin. Finally, acetyltransferase sirH probably acetylates deacetyl sirodesmin to produce sirodesmin PL. The sequence is that of Thioredoxin reductase sirT from Leptosphaeria maculans (Blackleg fungus).